We begin with the raw amino-acid sequence, 1219 residues long: ATP-dependent helicase/nuclease subunit A (1219 aa).

The region spanning 12–477 is the UvrD-like helicase ATP-binding domain; the sequence is TRWTDNQWKS…IDLSQNFRSR (466 aa). 33–40 is a binding site for ATP; sequence AAAGSGKT. The region spanning 478 to 786 is the UvrD-like helicase C-terminal domain; sequence EEVLTTTNYL…RMMTIHSSKG (309 aa). Residues 997 to 1016 are disordered; the sequence is PSKQSVSELKRQHETEQSDT. Positions 1004-1016 are enriched in basic and acidic residues; that stretch reads ELKRQHETEQSDT.

This sequence belongs to the helicase family. AddA subfamily. In terms of assembly, heterodimer of AddA and AddB/RexB. The cofactor is Mg(2+).

The enzyme catalyses Couples ATP hydrolysis with the unwinding of duplex DNA by translocating in the 3'-5' direction.. It carries out the reaction ATP + H2O = ADP + phosphate + H(+). In terms of biological role, the heterodimer acts as both an ATP-dependent DNA helicase and an ATP-dependent, dual-direction single-stranded exonuclease. Recognizes the chi site generating a DNA molecule suitable for the initiation of homologous recombination. The AddA nuclease domain is required for chi fragment generation; this subunit has the helicase and 3' -&gt; 5' nuclease activities. In Staphylococcus saprophyticus subsp. saprophyticus (strain ATCC 15305 / DSM 20229 / NCIMB 8711 / NCTC 7292 / S-41), this protein is ATP-dependent helicase/nuclease subunit A.